Reading from the N-terminus, the 160-residue chain is RTX-II toxin-activating lysine-acyltransferase ApxIIC (160 aa).

Residues His23 and Asp92 contribute to the active site.

Belongs to the RTX toxin acyltransferase family. Homodimer.

The protein localises to the cytoplasm. It carries out the reaction a fatty acyl-[ACP] + L-lysyl-[protein] = N(6)-(fatty acyl)-L-lysyl-[protein] + holo-[ACP] + H(+). In terms of biological role, protein-lysine acyltransferase that catalyzes fatty acylation of the protoxin, thereby converting it to the active toxin. The polypeptide is RTX-II toxin-activating lysine-acyltransferase ApxIIC (apxIIC) (Actinobacillus pleuropneumoniae (Haemophilus pleuropneumoniae)).